The following is a 480-amino-acid chain: G-protein coupled receptor seb-2 (480 aa).

Residues Met1–Arg222 lie on the Extracellular side of the membrane. N-linked (GlcNAc...) asparagine glycosylation occurs at Asn95. A helical transmembrane segment spans residues Ile223–Leu243. The Cytoplasmic segment spans residues Leu244–His261. Residues Leu262 to Val282 form a helical membrane-spanning segment. Over Asn283–Gln305 the chain is Extracellular. Residues Leu306–Leu328 traverse the membrane as a helical segment. Over His329–Lys343 the chain is Cytoplasmic. A helical membrane pass occupies residues Val344–Asn364. Residues Asp365–Thr386 are Extracellular-facing. The helical transmembrane segment at Pro387–Val407 threads the bilayer. Residues Lys408–Lys423 lie on the Cytoplasmic side of the membrane. Residues Ala424–Tyr444 traverse the membrane as a helical segment. The Extracellular segment spans residues Arg445 to Ser480.

The protein belongs to the G-protein coupled receptor 2 family. Present in the head body-wall muscles from the L1 larval stage through to adulthood. Also expressed between L4 and the adult molt in vulval vm1 muscle cells. These cells play a role in opening the vulva during egg laying.

The protein resides in the cell membrane. Not known. Putative receptor. This is G-protein coupled receptor seb-2 from Caenorhabditis elegans.